The sequence spans 549 residues: Leucine-rich repeat, immunoglobulin-like domain and transmembrane domain-containing protein 2 (549 aa).

The first 22 residues, 1–22, serve as a signal peptide directing secretion; the sequence is MAFVFYCFLQVLVSWVIHAVQP. The LRRNT domain occupies 23-54; the sequence is FCLPECTCSEESFGRSLQCMSMSLGKIPDNFP. LRR repeat units lie at residues 80–103, 104–125, 128–149, and 152–173; these read SLEY…EDLP, ELRE…AFRA, LLRV…ALQF, and NLIY…VFLN. Asn-90 carries N-linked (GlcNAc...) asparagine glycosylation. The 53-residue stretch at 200-252 folds into the LRRCT domain; it reads NPWLCDCRLRGLAQFVKSVGPPFILVNSYLVCQGPVSKAGQLLHETELGVCMK. Residues 253–339 form the Ig-like domain; it reads PTISTPSVNV…FNSIGRSSLV (87 aa). Asn-261 is a glycosylation site (N-linked (GlcNAc...) asparagine). Residues Cys-274 and Cys-327 are joined by a disulfide bond. The Fibronectin type-III domain occupies 361-447; that stretch reads EVSAYVDLRV…QPPSQGQCVV (87 aa). The helical transmembrane segment at 463–483 threads the bilayer; that stretch reads LLHVTVVLCAVLLALPVGAYV. Asn-491 carries N-linked (GlcNAc...) asparagine glycosylation. A disordered region spans residues 521–549; that stretch reads FKDPSGVYEDGESHRVMEEDEEVEKEGIS. Residues 538 to 549 are compositionally biased toward acidic residues; the sequence is EEDEEVEKEGIS.

As to quaternary structure, interacts with LRIT1; may form a heterodimer with LRIT1.

It is found in the membrane. This chain is Leucine-rich repeat, immunoglobulin-like domain and transmembrane domain-containing protein 2 (Lrit2), found in Mus musculus (Mouse).